A 329-amino-acid polypeptide reads, in one-letter code: tRNA uridine(34) hydroxylase (329 aa).

Positions 123–217 (SDPDVILVDT…YLEEVPEEES (95 aa)) constitute a Rhodanese domain. The Cysteine persulfide intermediate role is filled by Cys177. The disordered stretch occupies residues 285–329 (REKQVQLSNARGETHVGGDAAHLIDQRKKEKLAHKEQQRSGKKAK). The segment covering 296-323 (GETHVGGDAAHLIDQRKKEKLAHKEQQR) has biased composition (basic and acidic residues).

This sequence belongs to the TrhO family.

It catalyses the reaction uridine(34) in tRNA + AH2 + O2 = 5-hydroxyuridine(34) in tRNA + A + H2O. Its function is as follows. Catalyzes oxygen-dependent 5-hydroxyuridine (ho5U) modification at position 34 in tRNAs. The protein is tRNA uridine(34) hydroxylase of Vibrio atlanticus (strain LGP32) (Vibrio splendidus (strain Mel32)).